Here is a 425-residue protein sequence, read N- to C-terminus: Serine--tRNA ligase (425 aa).

233 to 235 (TAE) is an L-serine binding site. 264 to 266 (RAE) lines the ATP pocket. Glutamate 287 is a binding site for L-serine. An ATP-binding site is contributed by 351 to 354 (EISS). Serine 387 is an L-serine binding site.

The protein belongs to the class-II aminoacyl-tRNA synthetase family. Type-1 seryl-tRNA synthetase subfamily. As to quaternary structure, homodimer. The tRNA molecule binds across the dimer.

The protein localises to the cytoplasm. It carries out the reaction tRNA(Ser) + L-serine + ATP = L-seryl-tRNA(Ser) + AMP + diphosphate + H(+). It catalyses the reaction tRNA(Sec) + L-serine + ATP = L-seryl-tRNA(Sec) + AMP + diphosphate + H(+). Its pathway is aminoacyl-tRNA biosynthesis; selenocysteinyl-tRNA(Sec) biosynthesis; L-seryl-tRNA(Sec) from L-serine and tRNA(Sec): step 1/1. Its function is as follows. Catalyzes the attachment of serine to tRNA(Ser). Is also able to aminoacylate tRNA(Sec) with serine, to form the misacylated tRNA L-seryl-tRNA(Sec), which will be further converted into selenocysteinyl-tRNA(Sec). The chain is Serine--tRNA ligase from Clostridium perfringens (strain ATCC 13124 / DSM 756 / JCM 1290 / NCIMB 6125 / NCTC 8237 / Type A).